The following is a 253-amino-acid chain: Probable transcriptional regulatory protein syc0529_d (253 aa).

It belongs to the TACO1 family.

It localises to the cytoplasm. The protein is Probable transcriptional regulatory protein syc0529_d of Synechococcus sp. (strain ATCC 27144 / PCC 6301 / SAUG 1402/1) (Anacystis nidulans).